The chain runs to 299 residues: Regucalcin (299 aa).

Glu18 provides a ligand contact to a divalent metal cation. The substrate site is built by Arg101, Asn103, and Glu121. Position 144 is an N6-succinyllysine (Lys144). Positions 154 and 204 each coordinate a divalent metal cation. Asp204 (proton donor/acceptor) is an active-site residue. N6-succinyllysine occurs at positions 244 and 253.

Belongs to the SMP-30/CGR1 family. In terms of assembly, monomer. Zn(2+) is required as a cofactor. Mn(2+) serves as cofactor. The cofactor is Ca(2+). It depends on Mg(2+) as a cofactor. In terms of tissue distribution, mainly present in the liver. Weak expression was found in the brain, lung and kidney.

It is found in the cytoplasm. It catalyses the reaction D-glucono-1,5-lactone + H2O = D-gluconate + H(+). Its pathway is cofactor biosynthesis; L-ascorbate biosynthesis via UDP-alpha-D-glucuronate pathway; L-ascorbate from UDP-alpha-D-glucuronate: step 3/4. Functionally, gluconolactonase with low activity towards other sugar lactones, including gulonolactone and galactonolactone. Catalyzes a key step in ascorbic acid (vitamin C) biosynthesis. Can also hydrolyze diisopropyl phosphorofluoridate and phenylacetate (in vitro). Calcium-binding protein. Modulates Ca(2+) signaling, and Ca(2+)-dependent cellular processes and enzyme activities. The polypeptide is Regucalcin (Rgn) (Mus musculus (Mouse)).